The primary structure comprises 317 residues: Cytochrome c biogenesis protein CcsA (317 aa).

The next 8 membrane-spanning stretches (helical) occupy residues 17 to 37 (VVSI…IVGL), 44 to 64 (GMIV…IYSG), 71 to 91 (LYES…LPYL), 101 to 121 (ITSP…LTQI), 143 to 163 (MILS…LLVI), 223 to 243 (IISI…VWAN), 252 to 272 (WDPK…YLHI), and 284 to 304 (AIVA…INIL).

Belongs to the CcmF/CycK/Ccl1/NrfE/CcsA family. In terms of assembly, may interact with Ccs1.

It is found in the plastid. It localises to the chloroplast thylakoid membrane. Its function is as follows. Required during biogenesis of c-type cytochromes (cytochrome c6 and cytochrome f) at the step of heme attachment. The protein is Cytochrome c biogenesis protein CcsA of Pelargonium hortorum (Common geranium).